Here is a 211-residue protein sequence, read N- to C-terminus: Uracil phosphoribosyltransferase (211 aa).

Residues arginine 78, arginine 103, and 130–138 each bind 5-phospho-alpha-D-ribose 1-diphosphate; that span reads DPMLATGNS. Uracil contacts are provided by residues isoleucine 193 and 198-200; that span reads GDA. Aspartate 199 provides a ligand contact to 5-phospho-alpha-D-ribose 1-diphosphate.

Belongs to the UPRTase family. It depends on Mg(2+) as a cofactor.

The enzyme catalyses UMP + diphosphate = 5-phospho-alpha-D-ribose 1-diphosphate + uracil. The protein operates within pyrimidine metabolism; UMP biosynthesis via salvage pathway; UMP from uracil: step 1/1. Its activity is regulated as follows. Allosterically activated by GTP. In terms of biological role, catalyzes the conversion of uracil and 5-phospho-alpha-D-ribose 1-diphosphate (PRPP) to UMP and diphosphate. In Acinetobacter baumannii (strain AB307-0294), this protein is Uracil phosphoribosyltransferase.